The sequence spans 220 residues: Cytidylate kinase (220 aa).

9 to 17 (GPAASGKST) is an ATP binding site.

It belongs to the cytidylate kinase family. Type 1 subfamily.

It localises to the cytoplasm. It carries out the reaction CMP + ATP = CDP + ADP. It catalyses the reaction dCMP + ATP = dCDP + ADP. The protein is Cytidylate kinase of Thermotoga neapolitana (strain ATCC 49049 / DSM 4359 / NBRC 107923 / NS-E).